Consider the following 305-residue polypeptide: Ornithine carbamoyltransferase (305 aa).

Residues 53-56 (STRT), glutamine 80, arginine 104, and 131-134 (HPCQ) each bind carbamoyl phosphate. L-ornithine-binding positions include asparagine 162, aspartate 219, and 223 to 224 (SM). Carbamoyl phosphate contacts are provided by residues 259 to 260 (CL) and arginine 287.

This sequence belongs to the aspartate/ornithine carbamoyltransferase superfamily. OTCase family.

The protein localises to the cytoplasm. The enzyme catalyses carbamoyl phosphate + L-ornithine = L-citrulline + phosphate + H(+). Its pathway is amino-acid biosynthesis; L-arginine biosynthesis; L-arginine from L-ornithine and carbamoyl phosphate: step 1/3. In terms of biological role, reversibly catalyzes the transfer of the carbamoyl group from carbamoyl phosphate (CP) to the N(epsilon) atom of ornithine (ORN) to produce L-citrulline. The protein is Ornithine carbamoyltransferase of Psychrobacter cryohalolentis (strain ATCC BAA-1226 / DSM 17306 / VKM B-2378 / K5).